A 440-amino-acid polypeptide reads, in one-letter code: Frizzled/smoothened-like sans CRD protein D (440 aa).

Residues 1 to 27 (MFIILKFLISFFLICNFFNYNDHFASG) form the signal peptide. Over 28 to 85 (QTLPPGFCPSPLIYRNSTNRQNDIENGYLFIGQTNCTSPCPSLIFSENEWHRVYNMSL) the chain is Extracellular. Residues Asn43, Asn62, and Asn82 are each glycosylated (N-linked (GlcNAc...) asparagine). Residues 86–106 (IAGTISMFALIFLIITYSPLV) form a helical membrane-spanning segment. Residues 107–110 (NKYN) are Cytoplasmic-facing. The helical transmembrane segment at 111–131 (GYTRHTVGILFLFCGIFLTVT) threads the bilayer. Over 132 to 162 (TDGRQLWDIDLGFEKYCPEPGRFARQSDTKC) the chain is Extracellular. The helical transmembrane segment at 163–183 (LVTAIFFQYGCVTSILWWAAI) threads the bilayer. At 184–200 (SVDLWMTIRKVKISKLQ) the chain is on the cytoplasmic side. A helical transmembrane segment spans residues 201 to 221 (FITYAVILNIITLILTFAPIA). The Extracellular segment spans residues 222 to 244 (SKQYGYGEAAIGCWLMDLKYQVG). The helical transmembrane segment at 245-265 (YFWAPVGFCLCVGCVSIVLII) threads the bilayer. The Cytoplasmic portion of the chain corresponds to 266–285 (REIYKVSDAIKKKLLAKHLK). The chain crosses the membrane as a helical span at residues 286-306 (PLMLIILMLSEFIYMFIFYSY). Over 307 to 346 (TTSRRGHYHDVVEKYIRCLFINASNPSICEVDVSISSPAH) the chain is Extracellular. An N-linked (GlcNAc...) asparagine glycan is attached at Asn328. The chain crosses the membrane as a helical span at residues 347-367 (FFFHFCMRLMGIEGLIFFGFT). Residues 368–440 (RQTKRIWLRS…IELSGVDSKN (73 aa)) are Cytoplasmic-facing. Residues 395-428 (ISSDEKTSNSSHRTTRGCRETEFGESIEQSNDPE) form a disordered region.

The protein belongs to the G-protein coupled receptor Fz/Smo family.

The protein resides in the membrane. This is Frizzled/smoothened-like sans CRD protein D (fscD) from Dictyostelium discoideum (Social amoeba).